The primary structure comprises 313 residues: Acetaldehyde dehydrogenase 2 (313 aa).

S12–I15 serves as a coordination point for NAD(+). The Acyl-thioester intermediate role is filled by C132. Residues S163 to N171 and N287 each bind NAD(+).

The protein belongs to the acetaldehyde dehydrogenase family.

The catalysed reaction is acetaldehyde + NAD(+) + CoA = acetyl-CoA + NADH + H(+). The sequence is that of Acetaldehyde dehydrogenase 2 (amnH) from Paraburkholderia xenovorans (strain LB400).